Consider the following 125-residue polypeptide: Ribonuclease P protein component (125 aa).

The protein belongs to the RnpA family. In terms of assembly, consists of a catalytic RNA component (M1 or rnpB) and a protein subunit.

It catalyses the reaction Endonucleolytic cleavage of RNA, removing 5'-extranucleotides from tRNA precursor.. Functionally, RNaseP catalyzes the removal of the 5'-leader sequence from pre-tRNA to produce the mature 5'-terminus. It can also cleave other RNA substrates such as 4.5S RNA. The protein component plays an auxiliary but essential role in vivo by binding to the 5'-leader sequence and broadening the substrate specificity of the ribozyme. The sequence is that of Ribonuclease P protein component from Clostridium botulinum (strain Alaska E43 / Type E3).